The chain runs to 105 residues: Thioredoxin (105 aa).

The 104-residue stretch at 2–105 (VKQIDSKDAF…KLEATINEFV (104 aa)) folds into the Thioredoxin domain. Lysine 3 carries the N6-acetyllysine modification. Lysine 8 is subject to N6-succinyllysine. Residues cysteine 32 and cysteine 35 each act as nucleophile in the active site. Cysteine 32 and cysteine 35 form a disulfide bridge. An N6-acetyllysine modification is found at lysine 39. S-nitrosocysteine occurs at positions 62 and 69. Cysteine 73 carries the post-translational modification S-nitrosocysteine; alternate. Lysine 94 is modified (N6-acetyllysine; alternate). Residue lysine 94 is modified to N6-succinyllysine; alternate.

This sequence belongs to the thioredoxin family. As to quaternary structure, homodimer; disulfide-linked. Interacts with TXNIP through the redox-active site. Interacts with MAP3K5 and CASP3. Interacts with APEX1; the interaction stimulates the FOS/JUN AP-1 DNA-binding activity in a redox-dependent manner. In the fully reduced protein, both Cys-69 and Cys-73 are nitrosylated in response to nitric oxide (NO). When two disulfide bonds are present in the protein, only Cys-73 is nitrosylated. Cys-73 can serve as donor for nitrosylation of target proteins.

Its subcellular location is the nucleus. The protein resides in the cytoplasm. The protein localises to the secreted. Functionally, participates in various redox reactions through the reversible oxidation of its active center dithiol to a disulfide and catalyzes dithiol-disulfide exchange reactions. Plays a role in the reversible S-nitrosylation of cysteine residues in target proteins, and thereby contributes to the response to intracellular nitric oxide. Nitrosylates the active site Cys of CASP3 in response to nitric oxide (NO), and thereby inhibits caspase-3 activity. Induces the FOS/JUN AP-1 DNA binding activity in ionizing radiation (IR) cells through its oxidation/reduction status and stimulates AP-1 transcriptional activity. This chain is Thioredoxin (TXN), found in Callithrix jacchus (White-tufted-ear marmoset).